Reading from the N-terminus, the 620-residue chain is MSVTTSFGIWLNHINLDNQASFLYNNPHFCNRRFNRISMLRTVSLARNRLRSETPSSFLARDRLRSKTPSSSPFSSKRHTPKTSEIEEESTPKDSVLLNPKDPSSAPKLFLVQPRLAPPKYLQAKLNEALCLANSLEEQRYGYFESDFFDKELPSHVVVQNPVRRSSKPRVDTYFGSGTVDNIKCHLNAEDSKEEVDAVFVNAILTAIQQRNLERIWAKPVLDRVGLIIEIFNAHAHTKEAKLQAELAALMYNKSRLVRVRGTDGRHTFGQFGEAEVVSARGRAGSKGTGGGFVGGAGETELQLQRRRISDRRIRLLSQIKEAQRTRLLQRAGRKKRVGLEGESSGTIAVVGYTNAGKSTLISALTKTALYCNERLFATLDPTLKSAHLPSGNFVLLSDTVGFISDLPIQLVKAFQSTLEEVVEADLLLHVVDSTAPNIEEHRSTVLHVLNQIGVPEEKLQNMIEVWNKIDYEEDEVEEEKYLDDGEGVGEEDEDEADLKAEETVDASEATVDEDQIQNGDGDDADGWLLSEDENADDPEFWKVPEVAKVDAANKKGPDVRVSALTGVGLKELLYLIDDKMKEKKLKSPTIVERSELHKRKWRPPRNDDEEERLIPLDQR.

Residues 1–65 (MSVTTSFGIW…SSFLARDRLR (65 aa)) constitute a chloroplast transit peptide. Residues 57–100 (SFLARDRLRSKTPSSSPFSSKRHTPKTSEIEEESTPKDSVLLNP) are disordered. Residues 346–585 (GTIAVVGYTN…LIDDKMKEKK (240 aa)) enclose the Hflx-type G domain. Residues 352–359 (GYTNAGKS), 377–381 (FATLD), 399–402 (DTVG), and 468–471 (NKID) each bind GTP. Mg(2+)-binding residues include Ser-359 and Thr-379. Acidic residues-rich tracts occupy residues 478-497 (EEEKYLDDGEGVGEEDEDEA) and 511-521 (TVDEDQIQNGD). The tract at residues 478–521 (EEEKYLDDGEGVGEEDEDEADLKAEETVDASEATVDEDQIQNGD) is disordered. 563–565 (SAL) contributes to the GTP binding site. The interval 597 to 620 (LHKRKWRPPRNDDEEERLIPLDQR) is disordered.

This sequence belongs to the TRAFAC class OBG-HflX-like GTPase superfamily. HflX GTPase family. The cofactor is Mg(2+).

Its subcellular location is the plastid. The protein resides in the chloroplast. The sequence is that of GTP-binding protein At3g49725, chloroplastic from Arabidopsis thaliana (Mouse-ear cress).